The following is a 377-amino-acid chain: Compound eye opsin BCRH2 (377 aa).

Topologically, residues Met1–Trp53 are extracellular. Residue Asn3 is glycosylated (N-linked (GlcNAc...) asparagine). The helical transmembrane segment at His54 to Leu78 threads the bilayer. The Cytoplasmic portion of the chain corresponds to Phe79–Asn90. The chain crosses the membrane as a helical span at residues Ile91–Cys115. The Extracellular portion of the chain corresponds to Phe116–Tyr131. A disulfide bridge connects residues Cys128 and Cys205. The helical transmembrane segment at Ala132 to Phe151 threads the bilayer. Over Asp152–Lys170 the chain is Cytoplasmic. The chain crosses the membrane as a helical span at residues Ala171–Gly194. The Extracellular segment spans residues Asn195 to Ser218. Residues Tyr219–Ile246 form a helical membrane-spanning segment. At Phe247–Lys281 the chain is on the cytoplasmic side. A helical membrane pass occupies residues Thr282–Val305. Over Met306–Thr313 the chain is Extracellular. The chain crosses the membrane as a helical span at residues Pro314–Ser338. An N6-(retinylidene)lysine modification is found at Lys325. The Cytoplasmic segment spans residues His339 to Ala377.

This sequence belongs to the G-protein coupled receptor 1 family. Opsin subfamily. Phosphorylated on some or all of the serine and threonine residues present in the C-terminal region. In terms of tissue distribution, expressed in all of the seven retinular cells (R1-R7) forming the main rhabdom in each ommatidium.

Its subcellular location is the membrane. Its function is as follows. Visual pigments are the light-absorbing molecules that mediate vision. They consist of an apoprotein, opsin, covalently linked to cis-retinal. This opsin produces visual pigments with maximal absorption in the blue-green region of the spectrum. This chain is Compound eye opsin BCRH2, found in Hemigrapsus sanguineus (Asian shore crab).